Reading from the N-terminus, the 525-residue chain is MELTLWTYEGPPHIGAMRIATSMKKLHYVLHAPQGDTYADLLFTMIERRGSRPPVTYTTFQARDLGGDTAELVKGHIKEAVDRFKPEALLVGESCTAELIQDQPGSLAKGMGFDIPIVSLELPAYSKKENWGGSETFYQIVRSLLKDHSRESKQSWQEEKRRPRVNLLGPTLLGFRCRDDVLEIQKLLGQYGIDVNVVAPLGASPADILRIPNADVNVCLYPEIAESTCIWLERNLNIPFTTTVPLGVGATQDFLKELHKVLEMEIPQSVNESNNSKLTWYSNSVDSNYLTGKRVFIFGDGTHALAAARIANEELGFKVVGLGTYSREMARKVRPAAKALGLEALITNDYLEVEDAIKETSPELVLGTQMERHSAKRLGIPCAVISTPMHVQDVPARYSPQMGWEGANVIFDDWVHPLMMGLEEHLIGMFKHDFEFVDGHQSHLGHLGGKGTQNTTKEAIKTNLQDSVITDGDPIWTHEGEKELSKIPFFVRGKVRRNTENYARQAGCREINEETLYDAKAHYKA.

[4Fe-4S] cluster is bound at residue D36. Catalysis depends on D286, which acts as the Proton donor. Substrate is bound at residue 421 to 422; the sequence is GL.

It belongs to the ChlB/BchB/BchZ family. In terms of assembly, protochlorophyllide reductase is composed of three subunits; ChlL, ChlN and ChlB. Forms a heterotetramer of two ChlB and two ChlN subunits. The cofactor is [4Fe-4S] cluster.

The catalysed reaction is chlorophyllide a + oxidized 2[4Fe-4S]-[ferredoxin] + 2 ADP + 2 phosphate = protochlorophyllide a + reduced 2[4Fe-4S]-[ferredoxin] + 2 ATP + 2 H2O. It participates in porphyrin-containing compound metabolism; chlorophyll biosynthesis (light-independent). Component of the dark-operative protochlorophyllide reductase (DPOR) that uses Mg-ATP and reduced ferredoxin to reduce ring D of protochlorophyllide (Pchlide) to form chlorophyllide a (Chlide). This reaction is light-independent. The NB-protein (ChlN-ChlB) is the catalytic component of the complex. The chain is Light-independent protochlorophyllide reductase subunit B from Prochlorococcus marinus (strain NATL1A).